Here is a 101-residue protein sequence, read N- to C-terminus: MKKFFLLFLALGAVAFAGEGESMIKAYSVVAAGVGLGLAALGGAVGMGHTAAATIAGTARNPGLGGKLMTTMFIALAMIEAQVIYTLVIALIALYANPFIG.

A run of 2 helical transmembrane segments spans residues 28–48 and 72–92; these read SVVA…VGMG and MFIA…IALI.

Belongs to the ATPase C chain family. In terms of assembly, F-type ATPases have 2 components, F(1) - the catalytic core - and F(0) - the membrane proton channel. F(1) has five subunits: alpha(3), beta(3), gamma(1), delta(1), epsilon(1). F(0) has three main subunits: a(1), b(2) and c(10-14). The alpha and beta chains form an alternating ring which encloses part of the gamma chain. F(1) is attached to F(0) by a central stalk formed by the gamma and epsilon chains, while a peripheral stalk is formed by the delta and b chains.

It localises to the cell inner membrane. Its function is as follows. F(1)F(0) ATP synthase produces ATP from ADP in the presence of a proton or sodium gradient. F-type ATPases consist of two structural domains, F(1) containing the extramembraneous catalytic core and F(0) containing the membrane proton channel, linked together by a central stalk and a peripheral stalk. During catalysis, ATP synthesis in the catalytic domain of F(1) is coupled via a rotary mechanism of the central stalk subunits to proton translocation. In terms of biological role, key component of the F(0) channel; it plays a direct role in translocation across the membrane. A homomeric c-ring of between 10-14 subunits forms the central stalk rotor element with the F(1) delta and epsilon subunits. This is ATP synthase subunit c from Sulfurovum sp. (strain NBC37-1).